Consider the following 734-residue polypeptide: DNA replication licensing factor MCM5 (734 aa).

At Ser-2 the chain carries N-acetylserine. Ser-315 bears the Phosphoserine mark. The MCM domain maps to 331-537; sequence VYEVISKSIA…RDVMLAKHVI (207 aa). Arg-371 provides a ligand contact to ADP. N6-acetyllysine is present on residues Lys-392 and Lys-396. Ser-605 bears the Phosphoserine mark. The residue at position 696 (Lys-696) is an N6-acetyllysine.

It belongs to the MCM family. Component of the MCM2-7 complex. The complex forms a toroidal hexameric ring with the proposed subunit order MCM2-MCM6-MCM4-MCM7-MCM3-MCM5. Component of the CMG helicase complex, a hexameric ring of related MCM2-7 subunits stabilized by CDC45 and the tetrameric GINS complex. Interacts with ANKRD17. Interacts with MCMBP. Interacts with TONSL; the interaction is direct.

The protein resides in the nucleus. It is found in the chromosome. The catalysed reaction is ATP + H2O = ADP + phosphate + H(+). Its function is as follows. Acts as a component of the MCM2-7 complex (MCM complex) which is the replicative helicase essential for 'once per cell cycle' DNA replication initiation and elongation in eukaryotic cells. Core component of CDC45-MCM-GINS (CMG) helicase, the molecular machine that unwinds template DNA during replication, and around which the replisome is built. The active ATPase sites in the MCM2-7 ring are formed through the interaction surfaces of two neighboring subunits such that a critical structure of a conserved arginine finger motif is provided in trans relative to the ATP-binding site of the Walker A box of the adjacent subunit. The six ATPase active sites, however, are likely to contribute differentially to the complex helicase activity. The sequence is that of DNA replication licensing factor MCM5 (MCM5) from Homo sapiens (Human).